The sequence spans 569 residues: Urease subunit alpha (569 aa).

The Ni(2+) site is built by H136, H138, and K219. The residue at position 219 (K219) is an N6-carboxylysine. H221 serves as a coordination point for substrate. Ni(2+) contacts are provided by H248 and H274. Catalysis depends on H322, which acts as the Proton donor. D362 is a binding site for Ni(2+).

The protein belongs to the metallo-dependent hydrolases superfamily. Urease alpha subunit family. In terms of assembly, heterotrimer of UreA (gamma), UreB (beta) and UreC (alpha) subunits. Three heterotrimers associate to form the active enzyme. Ni cation serves as cofactor. Carboxylation allows a single lysine to coordinate two nickel ions.

It localises to the cytoplasm. The enzyme catalyses urea + 2 H2O + H(+) = hydrogencarbonate + 2 NH4(+). Its pathway is nitrogen metabolism; urea degradation; CO(2) and NH(3) from urea (urease route): step 1/1. The sequence is that of Urease subunit alpha from Dinoroseobacter shibae (strain DSM 16493 / NCIMB 14021 / DFL 12).